A 684-amino-acid polypeptide reads, in one-letter code: Beta-taxilin (684 aa).

A compositionally biased stretch (polar residues) spans 1–26; the sequence is MEANHSEQLSAERQSTPPGDSSSLPS. The segment at 1–132 is disordered; sequence MEANHSEQLS…KEPVSNKEQK (132 aa). Basic and acidic residues predominate over residues 45 to 64; it reads PEKEASVHPDISEELNRQLE. Acidic residues predominate over residues 93 to 107; it reads ESPDNEDGDCEETTE. Coiled-coil stretches lie at residues 135–351 and 378–467; these read KKIL…VLKE and NEVF…SEKD. Residues 458–475 show a composition bias toward basic and acidic residues; that stretch reads IRDAEISEKDDQSQHNSD. Disordered stretches follow at residues 458–485, 514–632, and 646–684; these read IRDA…VSVD, ESTP…DVPA, and PACE…EGVD. Residues Ser474 and Ser483 each carry the phosphoserine modification. The segment covering 514-524 has biased composition (basic and acidic residues); it reads ESTPHQSKETQ. A compositionally biased stretch (polar residues) spans 613 to 622; that stretch reads QAPQAPTEAS.

It belongs to the taxilin family. In terms of assembly, binds to the C-terminal coiled coil region of syntaxin family members STX1A, STX3A and STX4A. Has a preference for STX1A. In terms of tissue distribution, expressed in skeletal muscle.

Its function is as follows. Promotes motor nerve regeneration. May be involved in intracellular vesicle traffic. In Homo sapiens (Human), this protein is Beta-taxilin (TXLNB).